The following is a 192-amino-acid chain: MKIGVLALQGDFDAHRQVLERLGADVVMVRKPEQLREIEGLVIPGGESSTFLKLLGDAGFEELRKFVTTKPSFGTCAGAIMLAKQVENPAQKGTGALDIRVRRNAYGRQIESAILTSECSLPGGEMEMVYIRAPRIEEVGPGVEVLAKRDGHPVLVRQGKVLAATFHPELTGDTRVHELFLKMVRNGNSGEK.

An L-glutamine-binding site is contributed by 46-48; that stretch reads GES. Cys-76 acts as the Nucleophile in catalysis. L-glutamine-binding positions include Arg-103 and 131-132; that span reads IR. Active-site charge relay system residues include His-167 and Glu-169.

This sequence belongs to the glutaminase PdxT/SNO family. In terms of assembly, in the presence of PdxS, forms a dodecamer of heterodimers. Only shows activity in the heterodimer.

It carries out the reaction aldehydo-D-ribose 5-phosphate + D-glyceraldehyde 3-phosphate + L-glutamine = pyridoxal 5'-phosphate + L-glutamate + phosphate + 3 H2O + H(+). It catalyses the reaction L-glutamine + H2O = L-glutamate + NH4(+). It functions in the pathway cofactor biosynthesis; pyridoxal 5'-phosphate biosynthesis. In terms of biological role, catalyzes the hydrolysis of glutamine to glutamate and ammonia as part of the biosynthesis of pyridoxal 5'-phosphate. The resulting ammonia molecule is channeled to the active site of PdxS. In Koribacter versatilis (strain Ellin345), this protein is Pyridoxal 5'-phosphate synthase subunit PdxT.